A 674-amino-acid chain; its full sequence is Protein tesmin/TSO1-like CXC 2 (674 aa).

2 stretches are compositionally biased toward polar residues: residues 1-16 (MDTPQKSITQIGTPIS) and 76-89 (THNSSSSDPTNSVE). Disordered regions lie at residues 1-20 (MDTPQKSITQIGTPISKSRF) and 69-113 (KESR…GLNI). Over residues 95–109 (STSHEEVPAEGEDTK) the composition is skewed to basic and acidic residues. The region spanning 373 to 498 (SCKRCNCKKS…RCEGCKNAFG (126 aa)) is the CRC domain. Disordered stretches follow at residues 504–529 (SIDMEAEQEEENETSEKSRTAKSQQN) and 623–655 (IPNIKSVSPNGKRVSPPHMESSSSGSILGRRNG). The segment covering 507–516 (MEAEQEEENE) has biased composition (acidic residues).

The protein belongs to the lin-54 family. Ubiquitous but expressed mostly in all the aerial organs with highest expression in flowers.

It localises to the nucleus. Functionally, plays a role in development of both male and female reproductive tissues. The protein is Protein tesmin/TSO1-like CXC 2 (TCX2) of Arabidopsis thaliana (Mouse-ear cress).